The chain runs to 218 residues: 23 kDa integral membrane protein (218 aa).

Residues 1 to 12 lie on the Cytoplasmic side of the membrane; it reads MATLGTGMRCLK. Residues 13 to 36 form a helical membrane-spanning segment; it reads SCVFVLNIICLLCSLVLIGAGAYV. Topologically, residues 37-55 are extracellular; the sequence is EVKFSQYGDNLHKVWQAAP. The chain crosses the membrane as a helical span at residues 56–71; the sequence is IAIIVVGVIILIVSFL. Residues 72–82 are Cytoplasmic-facing; the sequence is GCCGAIKENVC. Residues 83 to 108 form a helical membrane-spanning segment; that stretch reads MLYMYAFFLVVLLIAELAAAIVAVVY. Residues 109–183 lie on the Extracellular side of the membrane; sequence KDRIDSEIDA…SVFGAFLKRN (75 aa). N165 is a glycosylation site (N-linked (GlcNAc...) asparagine). The helical transmembrane segment at 184-205 threads the bilayer; the sequence is LVIVACVAFGVCFFQLLSIVIA. Topologically, residues 206-218 are cytoplasmic; that stretch reads CCLGRQIKEYENV.

It belongs to the tetraspanin (TM4SF) family.

The protein resides in the membrane. The protein is 23 kDa integral membrane protein of Schistosoma mansoni (Blood fluke).